A 902-amino-acid chain; its full sequence is Leucine-rich repeat-containing G-protein coupled receptor 5A (902 aa).

An N-terminal signal peptide occupies residues 1–22; sequence MDTSRTSLFLCSVLYSLQLVGS. The Extracellular portion of the chain corresponds to 23–557; that stretch reads ARPGKQHRSC…DHLFGSWLTR (535 aa). 2 disulfides stabilise this stretch: Cys-32–Cys-38 and Cys-36–Cys-49. The LRRNT domain occupies 32-61; it reads CPTPCECEQDGMLVRVDCSDRGLTGLPRNI. 17 LRR repeats span residues 41–61, 62–85, 86–109, 111–133, 134–157, 159–181, 182–205, 207–229, 230–253, 254–276, 278–300, 301–324, 325–347, 348–372, 374–393, 394–417, and 418–441; these read DGML…PRNI, SIFT…ALHN, LHFL…AFAG, GSLK…ALQN, LRSL…SFNG, FSLR…ALES, LSAL…AFGN, SSLV…CFDG, LHSL…IKTL, KNLK…AFIG, PSLI…AFQH, LPEL…LTGT, TSLE…VCNQ, LPNL…GCQR, QKID…TFQQ, LVGL…SFSS, and LPSL…GLHG. Asn-60 and Asn-74 each carry an N-linked (GlcNAc...) asparagine glycan. A glycan (N-linked (GlcNAc...) asparagine) is linked at Asn-205. Cysteines 345 and 370 form a disulfide. A disulfide bond links Cys-476 and Cys-537. A glycan (N-linked (GlcNAc...) asparagine) is linked at Asn-496. Residues 558-578 traverse the membrane as a helical segment; that stretch reads IGVWLIVLLSFVCNALVIATV. Topologically, residues 579–589 are cytoplasmic; that stretch reads FRPLSYVPSIK. The chain crosses the membrane as a helical span at residues 590–610; the sequence is LLIGLIAIINTLMGLSSGVLA. One copy of the LRR 18 repeat lies at 598-619; it reads INTLMGLSSGVLATVDALTFGN. Over 611-634 the chain is Extracellular; it reads TVDALTFGNFAQYGAWWESGVGCQ. Cysteines 633 and 708 form a disulfide. A helical membrane pass occupies residues 635–655; the sequence is ITGFLSVFAAETSVFLLTVAA. The Cytoplasmic segment spans residues 656–678; it reads LERGFSIKCTTKFETKSSFLSVK. Residues 679–699 traverse the membrane as a helical segment; it reads LSIVFCFLLSIIIAVSPLMSG. The Extracellular portion of the chain corresponds to 700–718; that stretch reads STYGTSPFCFPLLFGDPSS. A helical transmembrane segment spans residues 719–739; sequence MVFMVALVLLNSLCFLVMTVA. Over 740 to 763 the chain is Cytoplasmic; it reads YTKLYCSLEKGELENVWDCSMVKH. Residues 764–784 traverse the membrane as a helical segment; it reads IALLLFTNCILYCPVAFLSFS. Topologically, residues 785 to 798 are extracellular; sequence SLLNLTFISPEVNK. N-linked (GlcNAc...) asparagine glycans are attached at residues Asn-788 and Asn-797. A helical membrane pass occupies residues 799 to 819; that stretch reads SILLLIIPLPACLNPLLYILF. Residues 820–902 are Cytoplasmic-facing; that stretch reads NPHFKEDIGS…LSAVAFVPCH (83 aa).

The protein belongs to the G-protein coupled receptor 1 family. Expressed in the developing epithelial stem cells of the intestine.

It localises to the cell membrane. It is found in the golgi apparatus. Its subcellular location is the trans-Golgi network membrane. Functionally, receptor for R-spondins that potentiates the canonical Wnt signaling pathway and acts as a stem cell marker of the intestinal epithelium and the hair follicle. Upon binding to R-spondins (RSPO1, RSPO2, RSPO3 or RSPO4), associates with phosphorylated LRP6 and frizzled receptors that are activated by extracellular Wnt receptors, triggering the canonical Wnt signaling pathway to increase expression of target genes. In contrast to classical G-protein coupled receptors, does not activate heterotrimeric G-proteins to transduce the signal. Involved in the development and/or maintenance of the adult intestinal stem cells during postembryonic development. The sequence is that of Leucine-rich repeat-containing G-protein coupled receptor 5A (lgr5-a) from Xenopus laevis (African clawed frog).